Consider the following 445-residue polypeptide: tRNA-2-methylthio-N(6)-dimethylallyladenosine synthase (445 aa).

The MTTase N-terminal domain occupies 3–124; the sequence is KKLYIKTYGC…LPELISKVVR (122 aa). Residues Cys-12, Cys-48, Cys-87, Cys-162, Cys-166, and Cys-169 each coordinate [4Fe-4S] cluster. Residues 148–380 form the Radical SAM core domain; the sequence is YPQGTSAFIS…QQELMAQQLA (233 aa). Residues 383 to 445 form the TRAM domain; it reads TSCVGSTMKV…SLNSLTGEIL (63 aa).

It belongs to the methylthiotransferase family. MiaB subfamily. As to quaternary structure, monomer. [4Fe-4S] cluster serves as cofactor.

It localises to the cytoplasm. The enzyme catalyses N(6)-dimethylallyladenosine(37) in tRNA + (sulfur carrier)-SH + AH2 + 2 S-adenosyl-L-methionine = 2-methylsulfanyl-N(6)-dimethylallyladenosine(37) in tRNA + (sulfur carrier)-H + 5'-deoxyadenosine + L-methionine + A + S-adenosyl-L-homocysteine + 2 H(+). Functionally, catalyzes the methylthiolation of N6-(dimethylallyl)adenosine (i(6)A), leading to the formation of 2-methylthio-N6-(dimethylallyl)adenosine (ms(2)i(6)A) at position 37 in tRNAs that read codons beginning with uridine. This is tRNA-2-methylthio-N(6)-dimethylallyladenosine synthase from Rickettsia conorii (strain ATCC VR-613 / Malish 7).